A 757-amino-acid polypeptide reads, in one-letter code: 5-methyltetrahydropteroyltriglutamate--homocysteine methyltransferase (757 aa).

Residues Arg16 to Lys19 and Lys112 each bind 5-methyltetrahydropteroyltri-L-glutamate. Residues Ile433 to Ser435 and Glu486 contribute to the L-homocysteine site. Residues Ile433 to Ser435 and Glu486 each bind L-methionine. Residues Arg517–Cys518 and Trp563 each bind 5-methyltetrahydropteroyltri-L-glutamate. Residue Asp601 coordinates L-homocysteine. Residue Asp601 participates in L-methionine binding. Residue Glu607 participates in 5-methyltetrahydropteroyltri-L-glutamate binding. Zn(2+)-binding residues include His643, Cys645, and Glu667. His696 functions as the Proton donor in the catalytic mechanism. Cys728 is a Zn(2+) binding site.

The protein belongs to the vitamin-B12 independent methionine synthase family. The cofactor is Zn(2+).

It catalyses the reaction 5-methyltetrahydropteroyltri-L-glutamate + L-homocysteine = tetrahydropteroyltri-L-glutamate + L-methionine. It participates in amino-acid biosynthesis; L-methionine biosynthesis via de novo pathway; L-methionine from L-homocysteine (MetE route): step 1/1. In terms of biological role, catalyzes the transfer of a methyl group from 5-methyltetrahydrofolate to homocysteine resulting in methionine formation. This is 5-methyltetrahydropteroyltriglutamate--homocysteine methyltransferase from Pasteurella multocida (strain Pm70).